The following is a 332-amino-acid chain: DNA-directed RNA polymerase subunit alpha (332 aa).

Positions 1-234 are alpha N-terminal domain (alpha-NTD); it reads MTVTVSQVLR…DQLSVFGDFT (234 aa). The segment at 248-332 is alpha C-terminal domain (alpha-CTD); it reads VDPVLLRPID…PGVSQYGMLG (85 aa).

Belongs to the RNA polymerase alpha chain family. In terms of assembly, homodimer. The RNAP catalytic core consists of 2 alpha, 1 beta, 1 beta' and 1 omega subunit. When a sigma factor is associated with the core the holoenzyme is formed, which can initiate transcription.

The catalysed reaction is RNA(n) + a ribonucleoside 5'-triphosphate = RNA(n+1) + diphosphate. Functionally, DNA-dependent RNA polymerase catalyzes the transcription of DNA into RNA using the four ribonucleoside triphosphates as substrates. In Xylella fastidiosa (strain M23), this protein is DNA-directed RNA polymerase subunit alpha.